The primary structure comprises 100 residues: NAD(P)H-quinone oxidoreductase subunit 4L, chloroplastic (100 aa).

The next 3 helical transmembrane spans lie at 1-21, 31-51, and 60-80; these read MLEH…YGLI, MCLE…SDFF, and IFSI…PAIL.

This sequence belongs to the complex I subunit 4L family. As to quaternary structure, NDH is composed of at least 16 different subunits, 5 of which are encoded in the nucleus.

Its subcellular location is the plastid. The protein resides in the chloroplast thylakoid membrane. The catalysed reaction is a plastoquinone + NADH + (n+1) H(+)(in) = a plastoquinol + NAD(+) + n H(+)(out). It catalyses the reaction a plastoquinone + NADPH + (n+1) H(+)(in) = a plastoquinol + NADP(+) + n H(+)(out). In terms of biological role, NDH shuttles electrons from NAD(P)H:plastoquinone, via FMN and iron-sulfur (Fe-S) centers, to quinones in the photosynthetic chain and possibly in a chloroplast respiratory chain. The immediate electron acceptor for the enzyme in this species is believed to be plastoquinone. Couples the redox reaction to proton translocation, and thus conserves the redox energy in a proton gradient. In Cucumis sativus (Cucumber), this protein is NAD(P)H-quinone oxidoreductase subunit 4L, chloroplastic.